The chain runs to 242 residues: Fibrinolytic enzyme, isozyme C (242 aa).

A Peptidase S1 domain is found at 1-242; it reads VIGGTNASPG…YLGWIGDNSR (242 aa). Cysteine 29 and cysteine 45 form a disulfide bridge. Catalysis depends on charge relay system residues histidine 44 and aspartate 93. Cystine bridges form between cysteine 127–cysteine 197, cysteine 158–cysteine 176, and cysteine 187–cysteine 219. Serine 191 acts as the Charge relay system in catalysis.

This sequence belongs to the peptidase S1 family.

This is Fibrinolytic enzyme, isozyme C from Lumbricus rubellus (Humus earthworm).